A 66-amino-acid polypeptide reads, in one-letter code: MPKQKTHRASAKRFKRTGSGGLKRFRAFTSHRFHGKTKKQRRHLRKASMVHSGDFKRIKSMVSQMR.

Basic residues predominate over residues 1–16 (MPKQKTHRASAKRFKR). The segment at 1 to 20 (MPKQKTHRASAKRFKRTGSG) is disordered.

This sequence belongs to the bacterial ribosomal protein bL35 family.

This chain is Large ribosomal subunit protein bL35, found in Streptococcus thermophilus (strain ATCC BAA-250 / LMG 18311).